Consider the following 336-residue polypeptide: Phosphate acyltransferase (336 aa).

This sequence belongs to the PlsX family. As to quaternary structure, homodimer. Probably interacts with PlsY.

The protein localises to the cytoplasm. It carries out the reaction a fatty acyl-[ACP] + phosphate = an acyl phosphate + holo-[ACP]. It functions in the pathway lipid metabolism; phospholipid metabolism. Catalyzes the reversible formation of acyl-phosphate (acyl-PO(4)) from acyl-[acyl-carrier-protein] (acyl-ACP). This enzyme utilizes acyl-ACP as fatty acyl donor, but not acyl-CoA. In Dictyoglomus turgidum (strain DSM 6724 / Z-1310), this protein is Phosphate acyltransferase.